We begin with the raw amino-acid sequence, 218 residues long: Large ribosomal subunit protein uL1 (218 aa).

Belongs to the universal ribosomal protein uL1 family. Part of the 50S ribosomal subunit.

Its function is as follows. Binds directly to 23S rRNA. Probably involved in E site tRNA release. Functionally, protein L1 is also a translational repressor protein, it controls the translation of its operon by binding to its mRNA. The polypeptide is Large ribosomal subunit protein uL1 (Metallosphaera sedula (strain ATCC 51363 / DSM 5348 / JCM 9185 / NBRC 15509 / TH2)).